We begin with the raw amino-acid sequence, 376 residues long: Chaperone protein DnaJ (376 aa).

In terms of domain architecture, J spans 5 to 70 (DYYEVLGVGR…DKKAAYDQFG (66 aa)). The segment at 132–210 (GLTKELRIPT…CHGDGRVEKS (79 aa)) adopts a CR-type zinc-finger fold. Residues cysteine 145, cysteine 148, cysteine 162, cysteine 165, cysteine 184, cysteine 187, cysteine 198, and cysteine 201 each coordinate Zn(2+). CXXCXGXG motif repeat units follow at residues 145-152 (CDLCDGSG), 162-169 (CTTCHGQG), 184-191 (CPTCHGRG), and 198-205 (CTKCHGDG).

The protein belongs to the DnaJ family. In terms of assembly, homodimer. The cofactor is Zn(2+).

It localises to the cytoplasm. Its function is as follows. Participates actively in the response to hyperosmotic and heat shock by preventing the aggregation of stress-denatured proteins and by disaggregating proteins, also in an autonomous, DnaK-independent fashion. Unfolded proteins bind initially to DnaJ; upon interaction with the DnaJ-bound protein, DnaK hydrolyzes its bound ATP, resulting in the formation of a stable complex. GrpE releases ADP from DnaK; ATP binding to DnaK triggers the release of the substrate protein, thus completing the reaction cycle. Several rounds of ATP-dependent interactions between DnaJ, DnaK and GrpE are required for fully efficient folding. Also involved, together with DnaK and GrpE, in the DNA replication of plasmids through activation of initiation proteins. This chain is Chaperone protein DnaJ, found in Shewanella putrefaciens (strain CN-32 / ATCC BAA-453).